A 408-amino-acid chain; its full sequence is Imidazolonepropionase (408 aa).

Residues His73 and His75 each contribute to the Fe(3+) site. Zn(2+) is bound by residues His73 and His75. 4-imidazolone-5-propanoate-binding residues include Arg82, Tyr145, and His178. Tyr145 is a binding site for N-formimidoyl-L-glutamate. His243 is a binding site for Fe(3+). Zn(2+) is bound at residue His243. Gln246 contributes to the 4-imidazolone-5-propanoate binding site. Asp318 is a binding site for Fe(3+). Asp318 lines the Zn(2+) pocket. 2 residues coordinate N-formimidoyl-L-glutamate: Asn320 and Gly322. Residue Ser323 participates in 4-imidazolone-5-propanoate binding.

This sequence belongs to the metallo-dependent hydrolases superfamily. HutI family. Requires Zn(2+) as cofactor. Fe(3+) serves as cofactor.

It is found in the cytoplasm. The enzyme catalyses 4-imidazolone-5-propanoate + H2O = N-formimidoyl-L-glutamate. Its pathway is amino-acid degradation; L-histidine degradation into L-glutamate; N-formimidoyl-L-glutamate from L-histidine: step 3/3. In terms of biological role, catalyzes the hydrolytic cleavage of the carbon-nitrogen bond in imidazolone-5-propanoate to yield N-formimidoyl-L-glutamate. It is the third step in the universal histidine degradation pathway. In Shewanella baltica (strain OS185), this protein is Imidazolonepropionase.